A 241-amino-acid chain; its full sequence is Phosphoadenosine 5'-phosphosulfate reductase (241 aa).

Cys235 functions as the Nucleophile; cysteine thiosulfonate intermediate in the catalytic mechanism.

Belongs to the PAPS reductase family. CysH subfamily.

The protein localises to the cytoplasm. It carries out the reaction [thioredoxin]-disulfide + sulfite + adenosine 3',5'-bisphosphate + 2 H(+) = [thioredoxin]-dithiol + 3'-phosphoadenylyl sulfate. Its pathway is sulfur metabolism; hydrogen sulfide biosynthesis; sulfite from sulfate: step 3/3. Functionally, catalyzes the formation of sulfite from phosphoadenosine 5'-phosphosulfate (PAPS) using thioredoxin as an electron donor. The sequence is that of Phosphoadenosine 5'-phosphosulfate reductase from Xanthomonas euvesicatoria pv. vesicatoria (strain 85-10) (Xanthomonas campestris pv. vesicatoria).